Here is a 427-residue protein sequence, read N- to C-terminus: N-formyl-4-amino-5-aminomethyl-2-methylpyrimidine deformylase (427 aa).

A Zn(2+)-binding site is contributed by H91. The active site involves D93. Residue D124 participates in Zn(2+) binding. E158 functions as the Proton acceptor in the catalytic mechanism. E159, D182, and H396 together coordinate Zn(2+).

This sequence belongs to the peptidase M20A family. The cofactor is Zn(2+). Requires Co(2+) as cofactor.

The catalysed reaction is N-formyl-4-amino-5-aminomethyl-2-methylpyrimidine + H2O = 4-amino-5-aminomethyl-2-methylpyrimidine + formate. It functions in the pathway cofactor biosynthesis; thiamine diphosphate biosynthesis. Its function is as follows. Catalyzes the deformylation of the formylaminopyrimidine N-formyl-4-amino-5-aminomethyl-2-methylpyrimidine (FAMP) to give the corresponding aminopyrimidine. The protein is N-formyl-4-amino-5-aminomethyl-2-methylpyrimidine deformylase of Halalkalibacterium halodurans (strain ATCC BAA-125 / DSM 18197 / FERM 7344 / JCM 9153 / C-125) (Bacillus halodurans).